The following is a 947-amino-acid chain: Bromodomain testis-specific protein (947 aa).

The region spanning 27–133 (RLTNQLQYLQ…KLFVQKLSQM (107 aa)) is the Bromo 1 domain. At S187 the chain carries Phosphoserine. The short motif at 209 to 220 (KGVKRKADTTTP) is the Nuclear localization signal element. The Bromo 2 domain occupies 267 to 376 (VKVTEQLRHC…DVFETHFSKI (110 aa)). Disordered stretches follow at residues 395–421 (ETTGRENTNEASSEGNSSGDSEDERVQ), 444–512 (PFRK…PMNY), 610–690 (NNQL…VKKM), and 849–873 (HLEQNTKEPKVSQENQRDLGNGLTV). Positions 403-413 (NEASSEGNSSG) are enriched in low complexity. A coiled-coil region spans residues 417-470 (DERVQRLAKLQEQLKAVHQQLQVLSQVPFRKLNKKKEKSKKEKKKEKVNNSNEN). Residues 447 to 462 (KLNKKKEKSKKEKKKE) show a composition bias toward basic residues. Residues 470–481 (NPRKMCEQMRLK) are compositionally biased toward basic and acidic residues. Residues 482 to 494 (EKSKRNQPKKRKQ) show a composition bias toward basic residues. The region spanning 500–582 (KSEDEDNAKP…ACLRKRPLKP (83 aa)) is the NET domain. A compositionally biased stretch (low complexity) spans 631-668 (VGSVSRLSESSSSSSSSSESESSSSDLSSSDSSGSESE). Composition is skewed to basic and acidic residues over residues 674–690 (TEVKPNDSPSKENVKKM) and 849–865 (HLEQNTKEPKVSQENQR).

This sequence belongs to the BET family. As to quaternary structure, interacts with SMARCE1. Interacts with mRNA splicing machinery proteins SRSF2, DDX5, HNRNPK and TARDBP. Interacts with the acetylated N-terminus of histone H1, H2, H3 and H4. Interacts with P-TEFb components CDK9 and CCNT1/cyclin-T1. Post-translationally, ubiquitinated in a SPOP-dependent manner, leading to proteasomal degradation.

The protein localises to the nucleus. Testis-specific chromatin protein that specifically binds histone H4 acetylated at 'Lys-5' and 'Lys-8' (H4K5ac and H4K8ac, respectively) and plays a key role in spermatogenesis. Required in late pachytene spermatocytes: plays a role in meiotic and post-meiotic cells by binding to acetylated histones at the promoter of specific meiotic and post-meiotic genes, facilitating their activation at the appropriate time. In the post-meiotic phase of spermatogenesis, binds to hyperacetylated histones and participates in their general removal from DNA. Also recognizes and binds a subset of butyrylated histones: able to bind histone H4 butyrylated at 'Lys-8' (H4K8ac), while it is not able to bind H4 butyrylated at 'Lys-5' (H4K5ac). Also acts as a component of the splicing machinery in pachytene spermatocytes and round spermatids and participates in 3'-UTR truncation of specific mRNAs in post-meiotic spermatids. Required for chromocenter organization, a structure comprised of peri-centromeric heterochromatin. This chain is Bromodomain testis-specific protein (BRDT), found in Macaca fascicularis (Crab-eating macaque).